The chain runs to 562 residues: Urocanate hydratase (562 aa).

NAD(+) is bound by residues 53–54, Gln131, 177–179, Glu197, Arg202, 243–244, 268–272, 278–279, and Tyr327; these read GG, GMG, NA, QTSAH, and YL. Residue Cys415 is part of the active site. An NAD(+)-binding site is contributed by Gly497.

Belongs to the urocanase family. Requires NAD(+) as cofactor.

It localises to the cytoplasm. The catalysed reaction is 4-imidazolone-5-propanoate = trans-urocanate + H2O. It participates in amino-acid degradation; L-histidine degradation into L-glutamate; N-formimidoyl-L-glutamate from L-histidine: step 2/3. Functionally, catalyzes the conversion of urocanate to 4-imidazolone-5-propionate. The sequence is that of Urocanate hydratase from Chelativorans sp. (strain BNC1).